A 279-amino-acid polypeptide reads, in one-letter code: Large ribosomal subunit protein uL2 (279 aa).

Residues 224-279 are disordered; sequence AMNAVDHPMGGGRGHSKGGNIPRSPWNQPSRGLKTRPKKSWDWMIVSDRRKNKAGK.

This sequence belongs to the universal ribosomal protein uL2 family. Part of the 50S ribosomal subunit. Forms a bridge to the 30S subunit in the 70S ribosome.

In terms of biological role, one of the primary rRNA binding proteins. Required for association of the 30S and 50S subunits to form the 70S ribosome, for tRNA binding and peptide bond formation. It has been suggested to have peptidyltransferase activity; this is somewhat controversial. Makes several contacts with the 16S rRNA in the 70S ribosome. The protein is Large ribosomal subunit protein uL2 of Elusimicrobium minutum (strain Pei191).